Here is a 264-residue protein sequence, read N- to C-terminus: Putative lipoate-protein ligase A (264 aa).

Positions glutamate 26–glutamate 213 constitute a BPL/LPL catalytic domain. Residues arginine 68, glycine 73 to phenylalanine 76, and lysine 130 each bind ATP. Lysine 130 is a (R)-lipoate binding site.

The protein belongs to the LplA family. As to quaternary structure, monomer.

The protein localises to the cytoplasm. It carries out the reaction L-lysyl-[lipoyl-carrier protein] + (R)-lipoate + ATP = N(6)-[(R)-lipoyl]-L-lysyl-[lipoyl-carrier protein] + AMP + diphosphate + H(+). It functions in the pathway protein modification; protein lipoylation via exogenous pathway; protein N(6)-(lipoyl)lysine from lipoate: step 1/2. The protein operates within protein modification; protein lipoylation via exogenous pathway; protein N(6)-(lipoyl)lysine from lipoate: step 2/2. Its function is as follows. Catalyzes both the ATP-dependent activation of exogenously supplied lipoate to lipoyl-AMP and the transfer of the activated lipoyl onto the lipoyl domains of lipoate-dependent enzymes. The polypeptide is Putative lipoate-protein ligase A (lplA) (Aeropyrum pernix (strain ATCC 700893 / DSM 11879 / JCM 9820 / NBRC 100138 / K1)).